A 539-amino-acid polypeptide reads, in one-letter code: Glutamate/serine transporter AimA (539 aa).

13 helical membrane-spanning segments follow: residues 11-31 (FSLM…FGAW), 36-56 (IAGP…LFIA), 82-102 (SFIG…VIPV), 137-157 (AFAS…VNLF), 164-184 (ITIF…FVGF), 199-219 (GWAS…FNGF), 238-258 (IAVV…QIAF), 283-303 (LAIA…AFVS), 350-370 (LIVS…AEII), 401-421 (LKGL…VLYW), 424-444 (WPLT…YFYY), 457-477 (FKAG…SYLG), and 486-506 (VIHY…FYVW).

Belongs to the amino acid-polyamine-organocation (APC) superfamily. AGT (TC 2.A.3.11) family.

Its subcellular location is the cell membrane. Major glutamate and serine transporter. Cannot transport threonine. AimA is the major glutamate transporter under standard growth conditions when glutamate is not limiting in the medium. This chain is Glutamate/serine transporter AimA, found in Bacillus subtilis (strain 168).